The sequence spans 478 residues: Sulfate adenylyltransferase subunit 1 (478 aa).

The region spanning 24 to 240 (KSMLRFLTCG…VLEDIDIDAD (217 aa)) is the tr-type G domain. The tract at residues 33-40 (GSVDDGKS) is G1. 33 to 40 (GSVDDGKS) contacts GTP. A G2 region spans residues 91 to 95 (GITID). Residues 112-115 (DTPG) form a G3 region. GTP contacts are provided by residues 112 to 116 (DTPGH) and 167 to 170 (NKMD). Positions 167–170 (NKMD) are G4. Positions 206–208 (SAL) are G5.

Belongs to the TRAFAC class translation factor GTPase superfamily. Classic translation factor GTPase family. CysN/NodQ subfamily. Heterodimer composed of CysD, the smaller subunit, and CysN.

It carries out the reaction sulfate + ATP + H(+) = adenosine 5'-phosphosulfate + diphosphate. It participates in sulfur metabolism; hydrogen sulfide biosynthesis; sulfite from sulfate: step 1/3. Functionally, with CysD forms the ATP sulfurylase (ATPS) that catalyzes the adenylation of sulfate producing adenosine 5'-phosphosulfate (APS) and diphosphate, the first enzymatic step in sulfur assimilation pathway. APS synthesis involves the formation of a high-energy phosphoric-sulfuric acid anhydride bond driven by GTP hydrolysis by CysN coupled to ATP hydrolysis by CysD. In Aliivibrio salmonicida (strain LFI1238) (Vibrio salmonicida (strain LFI1238)), this protein is Sulfate adenylyltransferase subunit 1.